A 159-amino-acid chain; its full sequence is Ribosomal RNA large subunit methyltransferase H (159 aa).

Residues L76, G108, and 127–132 (FSKMTF) each bind S-adenosyl-L-methionine.

It belongs to the RNA methyltransferase RlmH family. In terms of assembly, homodimer.

It is found in the cytoplasm. It catalyses the reaction pseudouridine(1915) in 23S rRNA + S-adenosyl-L-methionine = N(3)-methylpseudouridine(1915) in 23S rRNA + S-adenosyl-L-homocysteine + H(+). In terms of biological role, specifically methylates the pseudouridine at position 1915 (m3Psi1915) in 23S rRNA. The sequence is that of Ribosomal RNA large subunit methyltransferase H from Staphylococcus aureus (strain MSSA476).